The chain runs to 398 residues: tRNA(Ile)-lysidine synthase (398 aa).

25 to 30 (SGGVDS) lines the ATP pocket.

Belongs to the tRNA(Ile)-lysidine synthase family.

The protein resides in the cytoplasm. It carries out the reaction cytidine(34) in tRNA(Ile2) + L-lysine + ATP = lysidine(34) in tRNA(Ile2) + AMP + diphosphate + H(+). Ligates lysine onto the cytidine present at position 34 of the AUA codon-specific tRNA(Ile) that contains the anticodon CAU, in an ATP-dependent manner. Cytidine is converted to lysidine, thus changing the amino acid specificity of the tRNA from methionine to isoleucine. In Francisella tularensis subsp. tularensis (strain SCHU S4 / Schu 4), this protein is tRNA(Ile)-lysidine synthase.